The chain runs to 390 residues: Phosphopentomutase (390 aa).

Positions 10, 282, 287, 323, 324, and 335 each coordinate Mn(2+).

This sequence belongs to the phosphopentomutase family. Mn(2+) is required as a cofactor.

Its subcellular location is the cytoplasm. The enzyme catalyses 2-deoxy-alpha-D-ribose 1-phosphate = 2-deoxy-D-ribose 5-phosphate. It catalyses the reaction alpha-D-ribose 1-phosphate = D-ribose 5-phosphate. Its pathway is carbohydrate degradation; 2-deoxy-D-ribose 1-phosphate degradation; D-glyceraldehyde 3-phosphate and acetaldehyde from 2-deoxy-alpha-D-ribose 1-phosphate: step 1/2. Functionally, isomerase that catalyzes the conversion of deoxy-ribose 1-phosphate (dRib-1-P) and ribose 1-phosphate (Rib-1-P) to deoxy-ribose 5-phosphate (dRib-5-P) and ribose 5-phosphate (Rib-5-P), respectively. The protein is Phosphopentomutase of Lachnoclostridium phytofermentans (strain ATCC 700394 / DSM 18823 / ISDg) (Clostridium phytofermentans).